The primary structure comprises 655 residues: p-hydroxybenzoic acid efflux pump subunit AaeB (655 aa).

Helical transmembrane passes span 13 to 33 (FAVK…HFQL), 38 to 58 (WAVL…GGEP), 69 to 89 (LRII…ISMI), 93 to 113 (LLMI…SSLV), 121 to 141 (WGLS…EPLL), 152 to 172 (EIVI…PRSI), 370 to 390 (LFWL…IAVV), 407 to 427 (FIYG…VIIP), 431 to 451 (QSML…GIEV), 459 to 479 (MGAL…TFHF), and 482 to 502 (FLDS…VILL).

This sequence belongs to the aromatic acid exporter ArAE (TC 2.A.85) family.

It is found in the cell inner membrane. Its function is as follows. Forms an efflux pump with AaeA. Could function as a metabolic relief valve, allowing to eliminate certain compounds when they accumulate to high levels in the cell. The sequence is that of p-hydroxybenzoic acid efflux pump subunit AaeB from Salmonella dublin (strain CT_02021853).